Consider the following 450-residue polypeptide: Coiled-coil domain-containing protein 149-A (450 aa).

Coiled-coil stretches lie at residues methionine 1–lysine 197 and isoleucine 259–serine 286. The disordered stretch occupies residues serine 290 to glutamate 358. Over residues proline 343–threonine 354 the composition is skewed to polar residues.

The protein belongs to the CCDC149 family.

The protein is Coiled-coil domain-containing protein 149-A (ccdc149a) of Danio rerio (Zebrafish).